Consider the following 199-residue polypeptide: Large ribosomal subunit protein bL25 (199 aa).

Residues 1–21 (MNIEKTLSVQKREGYGKGPSG) are disordered.

The protein belongs to the bacterial ribosomal protein bL25 family. CTC subfamily. Part of the 50S ribosomal subunit; part of the 5S rRNA/L5/L18/L25 subcomplex. Contacts the 5S rRNA. Binds to the 5S rRNA independently of L5 and L18.

In terms of biological role, this is one of the proteins that binds to the 5S RNA in the ribosome where it forms part of the central protuberance. The sequence is that of Large ribosomal subunit protein bL25 from Desulfovibrio desulfuricans (strain ATCC 27774 / DSM 6949 / MB).